We begin with the raw amino-acid sequence, 163 residues long: MADSSFDIVSKVDRQEVDNALNQAAKELATRFDFRGTDTTIAWKGDEAIELTSSTGERVKAAVDVFKEKLIRRDISMKAFDAGEPQASGKTYKVNGTLKQGISSESAKKITKLIRDEGPKGVKTQIQGDEIRVSSKKRDDLQAVIAMLKQADLDVALQFVNYR.

This sequence belongs to the YajQ family.

Its function is as follows. Nucleotide-binding protein. In Mycolicibacterium paratuberculosis (strain ATCC BAA-968 / K-10) (Mycobacterium paratuberculosis), this protein is Nucleotide-binding protein MAP_4063c.